The following is a 209-amino-acid chain: Uracil phosphoribosyltransferase (209 aa).

5-phospho-alpha-D-ribose 1-diphosphate is bound by residues arginine 79, arginine 104, and 131–139; that span reads DPMLATGGS. Residues isoleucine 194 and 199–201 each bind uracil; that span reads GDA. Residue aspartate 200 coordinates 5-phospho-alpha-D-ribose 1-diphosphate.

This sequence belongs to the UPRTase family. It depends on Mg(2+) as a cofactor.

It catalyses the reaction UMP + diphosphate = 5-phospho-alpha-D-ribose 1-diphosphate + uracil. Its pathway is pyrimidine metabolism; UMP biosynthesis via salvage pathway; UMP from uracil: step 1/1. With respect to regulation, allosterically activated by GTP. Catalyzes the conversion of uracil and 5-phospho-alpha-D-ribose 1-diphosphate (PRPP) to UMP and diphosphate. The protein is Uracil phosphoribosyltransferase of Citrifermentans bemidjiense (strain ATCC BAA-1014 / DSM 16622 / JCM 12645 / Bem) (Geobacter bemidjiensis).